Consider the following 370-residue polypeptide: Probable neutral protease 2 homolog TRV_02539 (370 aa).

Positions 1–19 are cleaved as a signal peptide; the sequence is MQLVAALAALGALVAPAVA. Positions 20–188 are excised as a propeptide; it reads YPHAPMNETL…SIHSRALQKR (169 aa). 2 disulfides stabilise this stretch: cysteine 196-cysteine 267 and cysteine 274-cysteine 292. Histidine 316 contacts Zn(2+). Residue glutamate 317 is part of the active site. Histidine 320 and aspartate 331 together coordinate Zn(2+).

Belongs to the peptidase M35 family. Requires Zn(2+) as cofactor.

It is found in the secreted. The catalysed reaction is Preferential cleavage of bonds with hydrophobic residues in P1'. Also 3-Asn-|-Gln-4 and 8-Gly-|-Ser-9 bonds in insulin B chain.. Its function is as follows. Probable secreted metalloprotease that shows high activities on basic nuclear substrates such as histone and protamine. May be involved in virulence. In Trichophyton verrucosum (strain HKI 0517), this protein is Probable neutral protease 2 homolog TRV_02539.